Here is a 339-residue protein sequence, read N- to C-terminus: UDP-glucose 4-epimerase (339 aa).

Residues 12–13 (FI), 32–37 (DNLCNS), 59–60 (DI), 81–85 (FAGLK), Asn-100, Ser-125, Tyr-150, Lys-154, and Phe-179 contribute to the NAD(+) site. The substrate site is built by Ser-125 and Tyr-150. The Proton acceptor role is filled by Tyr-150. Residues Asn-180, 200–201 (NL), 217–219 (AVF), Arg-232, and 293–296 (RAGD) contribute to the substrate site.

The protein belongs to the NAD(P)-dependent epimerase/dehydratase family. Homodimer. It depends on NAD(+) as a cofactor.

It carries out the reaction UDP-alpha-D-glucose = UDP-alpha-D-galactose. Its pathway is carbohydrate metabolism; galactose metabolism. In terms of biological role, involved in the metabolism of galactose. Plays an essential role in the incorporation of galactose into meningococcal lipopolysaccharide surface molecules, which are important for pathogenesis. Catalyzes the conversion of UDP-galactose (UDP-Gal) to UDP-glucose (UDP-Glc) through a mechanism involving the transient reduction of NAD. The polypeptide is UDP-glucose 4-epimerase (galE) (Neisseria meningitidis serogroup B (strain ATCC BAA-335 / MC58)).